A 217-amino-acid polypeptide reads, in one-letter code: Small ribosomal subunit protein uS3 (217 aa).

The region spanning 38–106 is the KH type-2 domain; sequence IRQLIQTKLA…QVHINIVEIK (69 aa).

It belongs to the universal ribosomal protein uS3 family. Part of the 30S ribosomal subunit. Forms a tight complex with proteins S10 and S14.

Functionally, binds the lower part of the 30S subunit head. Binds mRNA in the 70S ribosome, positioning it for translation. This Lactococcus lactis subsp. lactis (strain IL1403) (Streptococcus lactis) protein is Small ribosomal subunit protein uS3.